Consider the following 245-residue polypeptide: Eukaryotic translation initiation factor 4E type 2 (245 aa).

The segment covering 1-38 has biased composition (basic and acidic residues); the sequence is MNNKFDALKDDDSGDHDQNEENSTQKDGEKEKTERDKN. The interval 1–52 is disordered; the sequence is MNNKFDALKDDDSGDHDQNEENSTQKDGEKEKTERDKNQSSSKRKAVVPGPA. Serine 13 carries the phosphoserine modification. An EIF4EBP1/2/3 binding region spans residues 54-57; it reads HPLQ. 78 to 79 is a binding site for mRNA; that stretch reads YE. The tract at residues 95-99 is EIF4EBP1/2/3 binding; that stretch reads WRFYS. MRNA contacts are provided by residues histidine 110 and 124 to 125; that span reads WE. Lysine 134 bears the N6-acetyllysine; alternate mark. Lysine 134 participates in a covalent cross-link: Glycyl lysine isopeptide (Lys-Gly) (interchain with G-Cter in ISG15); alternate. Residues 150–157 are EIF4EBP1/2/3 binding; it reads NLILAMLG. MRNA is bound by residues 174–179 and 222–224; these read RFQEDI and KMP. A Glycyl lysine isopeptide (Lys-Gly) (interchain with G-Cter in ISG15) cross-link involves residue lysine 222.

The protein belongs to the eukaryotic initiation factor 4E family. Interacts with EIF4EBP1, EIF4EBP2 and EIF4EBP3. Does not interact with eIF4G (EIF4G1, EIF4G2 or EIF4G3). Component of the 4EHP-GYF2 complex, at least composed of EIF4E2, GIGYF2 and ZNF598. Interacts with GIGYF2 (via the 4EHP-binding motif); the interaction is direct. Interacts with EIF4ENIF1/4E-T (via YXXXXLphi motif); increasing affinity for the 7-methylguanosine-containing mRNA cap. Post-translationally, ubiquitinated by ARIH1. The consequences of ubiquitination are however unclear: according to a report, EIF4E2 ubiquitination leads to promote EIF4E2 cap-binding and protein translation arrest. According to another report ubiquitination leads to its subsequent degradation. In terms of processing, ISGylation enhances its cap structure-binding activity and translation-inhibition activity.

It localises to the cytoplasm. It is found in the P-body. Recognizes and binds the 7-methylguanosine-containing mRNA cap during an early step in the initiation. Acts as a repressor of translation initiation. In contrast to EIF4E, it is unable to bind eIF4G (EIF4G1, EIF4G2 or EIF4G3), suggesting that it acts by competing with EIF4E and block assembly of eIF4F at the cap. In P-bodies, component of a complex that promotes miRNA-mediated translational repression. Involved in virus-induced host response by mediating miRNA MIR34A-induced translational silencing which controls IFNB1 production by a negative feedback mechanism. Its function is as follows. Component of the 4EHP-GYF2 complex, a multiprotein complex that acts as a repressor of translation initiation. In association with GIGYF2, assists ribosome-associated quality control (RQC) by sequestering the mRNA cap, blocking ribosome initiation and decreasing the translational load on problematic messages. Part of a pathway that works in parallel to RQC-mediated degradation of the stalled nascent polypeptide. GIGYF2 and EIF4E2 work downstream and independently of ZNF598, which seems to work as a scaffold that can recruit them to faulty mRNA even if alternative recruitment mechanisms may exist. In terms of biological role, (Microbial infection) Upon SARS coronavirus-2/SARS-CoV-2 infection, the interaction with non-structural protein 2 (nsp2) with GIGYF2 enhances GIGYF2 binding to EIF4E2 and increases repression of translation initiation of genes involved in antiviral innate immune response such as IFNB1. This Homo sapiens (Human) protein is Eukaryotic translation initiation factor 4E type 2.